A 268-amino-acid chain; its full sequence is Undecaprenyl-diphosphatase (268 aa).

7 consecutive transmembrane segments (helical) span residues 47 to 67, 83 to 103, 109 to 129, 144 to 164, 184 to 204, 217 to 237, and 246 to 266; these read FTILIQLGAILAILALYFAKL, FVIGVLVAFLPAAVIGALAGG, LFNPWVVCFSLIVGGAILLWV, FPLPMYLYIGCAQCLAMIPGV, AAEFSFFLAIPTMVGAFVYDL, LIVAIGFAVSFVTAIIVVKSF, and FTLFAWWRVIVGTLGLIALAL.

Belongs to the UppP family.

It localises to the cell inner membrane. The catalysed reaction is di-trans,octa-cis-undecaprenyl diphosphate + H2O = di-trans,octa-cis-undecaprenyl phosphate + phosphate + H(+). Catalyzes the dephosphorylation of undecaprenyl diphosphate (UPP). Confers resistance to bacitracin. This chain is Undecaprenyl-diphosphatase, found in Rhodopseudomonas palustris (strain BisB18).